The primary structure comprises 556 residues: Formate--tetrahydrofolate ligase (556 aa).

65-72 (TPAGEGKT) serves as a coordination point for ATP.

This sequence belongs to the formate--tetrahydrofolate ligase family.

The catalysed reaction is (6S)-5,6,7,8-tetrahydrofolate + formate + ATP = (6R)-10-formyltetrahydrofolate + ADP + phosphate. Its pathway is one-carbon metabolism; tetrahydrofolate interconversion. This Acetivibrio thermocellus (strain ATCC 27405 / DSM 1237 / JCM 9322 / NBRC 103400 / NCIMB 10682 / NRRL B-4536 / VPI 7372) (Clostridium thermocellum) protein is Formate--tetrahydrofolate ligase.